Consider the following 391-residue polypeptide: B2 bradykinin receptor (391 aa).

Residues 1–60 are Extracellular-facing; sequence MFSPWKISMFLSVREDSVPTTASFSADMLNVTLQGPTLNGTFAQSKCPQVEWLGWLNTIQ. 2 N-linked (GlcNAc...) asparagine glycosylation sites follow: Asn30 and Asn39. Residues 61 to 84 form a helical membrane-spanning segment; the sequence is PPFLWVLFVLATLENIFVLSVFCL. Residues 85-93 are Cytoplasmic-facing; that stretch reads HKSSCTVAE. A helical membrane pass occupies residues 94–118; sequence IYLGNLAAADLILACGLPFWAITIS. Residues 119–131 lie on the Extracellular side of the membrane; that stretch reads NNFDWLFGETLCR. Cys130 and Cys211 are joined by a disulfide. The helical transmembrane segment at 132 to 153 threads the bilayer; the sequence is VVNAIISMNLYSSICFLMLVSI. The Cytoplasmic segment spans residues 154–175; it reads DRYLALVKTMSMGRMRGVRWAK. Tyr156 bears the Phosphotyrosine mark. Residues 176-198 form a helical membrane-spanning segment; sequence LYSLVIWGCTLLLSSPMLVFRTM. At 199–221 the chain is on the extracellular side; that stretch reads KEYSDEGHNVTACVISYPSLIWE. Asn207 is a glycosylation site (N-linked (GlcNAc...) asparagine). The chain crosses the membrane as a helical span at residues 222-248; that stretch reads VFTNMLLNVVGFLLPLSVITFCTMQIM. Residues 249–267 are Cytoplasmic-facing; sequence QVLRNNEMQKFKEIQTERR. The helical transmembrane segment at 268 to 292 threads the bilayer; it reads ATVLVLVVLLLFIICWLPFQISTFL. Over 293 to 311 the chain is Extracellular; it reads DTLHRLGILSSCQDERIID. A helical membrane pass occupies residues 312 to 335; that stretch reads VITQIASFMAYSNSCLNPLVYVIV. At 336 to 391 the chain is on the cytoplasmic side; it reads GKRFRKKSWEVYQGVCQKGGCRSEPIQMENSMGTLRTSISVERQIHKLQDWAGSRQ. Tyr347 is subject to Phosphotyrosine. A lipid anchor (S-palmitoyl cysteine) is attached at Cys351. Ser366 carries the phosphoserine modification. Thr369 is subject to Phosphothreonine. Phosphoserine; by GRK6 occurs at positions 373 and 375.

It belongs to the G-protein coupled receptor 1 family. Bradykinin receptor subfamily. BDKRB2 sub-subfamily. As to quaternary structure, forms a complex with PECAM1 and GNAQ. Interacts with PECAM1. As to expression, ubiquitous. Widespread in normal smooth muscle tissue and neurons.

The protein resides in the cell membrane. Functionally, receptor for bradykinin. It is associated with G proteins that activate a phosphatidylinositol-calcium second messenger system. The polypeptide is B2 bradykinin receptor (BDKRB2) (Homo sapiens (Human)).